A 171-amino-acid chain; its full sequence is Myosin regulatory light polypeptide 9 (171 aa).

Basic residues predominate over residues 1 to 15 (MSSKRAKAKTTKKRP). A disordered region spans residues 1 to 21 (MSSKRAKAKTTKKRPQSATSN). An N-acetylserine modification is found at serine 2. The residue at position 19 (threonine 19) is a Phosphothreonine; by MLCK, CIT and ROCK2. At serine 20 the chain carries Phosphoserine; by CDC42BP, CIT, MLCK, PAK1, ROCK1, ROCK2, DAPK1, DAPK2 and ZIPK/DAPK3. 2 EF-hand domains span residues 29–64 (SQIQ…LGKN) and 98–133 (DPED…MGDR). Ca(2+) contacts are provided by aspartate 42, asparagine 44, aspartate 46, and aspartate 53.

Myosin is a hexamer of 2 heavy chains and 4 light chains: interacts with myosin heavy chain MYO19. Interacts with LUZP1; the interaction results in inhibition of phosphorylation of MYL9 by DAPK3. Post-translationally, phosphorylation increases the actin-activated myosin ATPase activity and thereby regulates the contractile activity. It is required to generate the driving force in the migration of the cells but not necessary for localization of myosin-2 at the leading edge. Phosphorylation is required for myotube formation. Phosphorylated by DAPK3; DAPK3-mediated phosphorylation is inhibited by LUZP1. As to expression, smooth muscle tissues and in some, but not all, nonmuscle cells.

The protein resides in the cytoplasm. It is found in the cytoskeleton. The protein localises to the cell cortex. Its function is as follows. Myosin regulatory subunit that plays an important role in regulation of both smooth muscle and nonmuscle cell contractile activity via its phosphorylation. Implicated in cytokinesis, receptor capping, and cell locomotion. In myoblasts, may regulate PIEZO1-dependent cortical actomyosin assembly involved in myotube formation. This Rattus norvegicus (Rat) protein is Myosin regulatory light polypeptide 9 (Myl9).